Consider the following 440-residue polypeptide: Probable aldose 1-epimerase ARB_05372 (440 aa).

A signal peptide spans 1–24 (MCGVLRQLMLLLLAFLSITPSCSA). N-linked (GlcNAc...) asparagine glycans are attached at residues asparagine 32, asparagine 38, asparagine 43, asparagine 68, and asparagine 112. 125 to 126 (NR) provides a ligand contact to substrate. N-linked (GlcNAc...) asparagine glycans are attached at residues asparagine 129, asparagine 147, asparagine 163, asparagine 171, and asparagine 199. The active-site Proton donor is histidine 233. N-linked (GlcNAc...) asparagine glycosylation is found at asparagine 243, asparagine 275, asparagine 281, and asparagine 306. Aspartate 311 contributes to the substrate binding site. 4 N-linked (GlcNAc...) asparagine glycosylation sites follow: asparagine 321, asparagine 337, asparagine 365, and asparagine 385. The Proton acceptor role is filled by glutamate 401.

This sequence belongs to the aldose epimerase family. Monomer.

It localises to the secreted. The catalysed reaction is alpha-D-glucose = beta-D-glucose. It functions in the pathway carbohydrate metabolism; hexose metabolism. Its function is as follows. Mutarotase converts alpha-aldose to the beta-anomer. It is active on D-glucose, L-arabinose, D-xylose, D-galactose, maltose and lactose. The protein is Probable aldose 1-epimerase ARB_05372 of Arthroderma benhamiae (strain ATCC MYA-4681 / CBS 112371) (Trichophyton mentagrophytes).